A 285-amino-acid chain; its full sequence is Coagulation factor IX (285 aa).

Sulfotyrosine is present on Tyr-23. N-linked (GlcNAc...) asparagine glycosylation occurs at Asn-25. A Phosphothreonine; alternate modification is found at Thr-27. Thr-27 carries O-linked (GalNAc...) threonine; alternate glycosylation. Asn-45 carries an N-linked (GlcNAc...) asparagine glycan. An O-linked (GalNAc...) threonine glycan is attached at Thr-47. One can recognise a Peptidase S1 domain in the interval 59–285 (VVGGEDAKPG…YTKVSRYVNW (227 aa)). Residues Cys-84 and Cys-100 are joined by a disulfide bond. His-99 (charge relay system) is an active-site residue. Ca(2+)-binding residues include Asn-115, Glu-120, and Glu-123. 2 N-linked (GlcNAc...) asparagine glycosylation sites follow: Asn-127 and Asn-138. The Charge relay system role is filled by Asp-147. Intrachain disulfides connect Cys-214/Cys-228 and Cys-239/Cys-267. Residue Ser-243 is the Charge relay system of the active site.

The protein belongs to the peptidase S1 family. In terms of assembly, heterodimer of a light chain and a heavy chain; disulfide-linked. Interacts (inactive and activated) with F11 (activated) in calcium-dependent manner. Interacts with SERPINC1. Post-translationally, activated by factor XIa, which excises the activation peptide. The propeptide can also be removed by snake venom protease. Activated by coagulation factor VIIa-tissue factor (F7-F3) complex in calcium-dependent manner.

Its subcellular location is the secreted. The catalysed reaction is Selective cleavage of Arg-|-Ile bond in factor X to form factor Xa.. Its function is as follows. Factor IX is a vitamin K-dependent plasma protein that participates in the intrinsic pathway of blood coagulation by converting factor X to its active form in the presence of Ca(2+) ions, phospholipids, and factor VIIIa. This chain is Coagulation factor IX (F9), found in Cavia porcellus (Guinea pig).